The primary structure comprises 301 residues: Glycine--tRNA ligase alpha subunit (301 aa).

The protein belongs to the class-II aminoacyl-tRNA synthetase family. As to quaternary structure, tetramer of two alpha and two beta subunits.

The protein resides in the cytoplasm. The catalysed reaction is tRNA(Gly) + glycine + ATP = glycyl-tRNA(Gly) + AMP + diphosphate. The polypeptide is Glycine--tRNA ligase alpha subunit (Actinobacillus pleuropneumoniae serotype 5b (strain L20)).